Reading from the N-terminus, the 131-residue chain is uncharacterized protein (131 aa).

Positions 1–67 are disordered; sequence MCSARKLLRG…HSGEPIGDDY (67 aa). Ser-14 carries the post-translational modification Phosphoserine. Residues 99–119 form a helical membrane-spanning segment; sequence VVVLFFWLMLWFLGLQALGLV.

This sequence belongs to the FAM241 family.

It localises to the membrane. This is an uncharacterized protein from Mus musculus (Mouse).